The chain runs to 429 residues: Enolase (429 aa).

Gln164 lines the (2R)-2-phosphoglycerate pocket. Glu206 serves as the catalytic Proton donor. Asp243, Glu286, and Asp313 together coordinate Mg(2+). The (2R)-2-phosphoglycerate site is built by Lys338, Arg367, Ser368, and Lys389. The active-site Proton acceptor is Lys338.

The protein belongs to the enolase family. Mg(2+) serves as cofactor.

The protein resides in the cytoplasm. It is found in the secreted. It localises to the cell surface. The catalysed reaction is (2R)-2-phosphoglycerate = phosphoenolpyruvate + H2O. The protein operates within carbohydrate degradation; glycolysis; pyruvate from D-glyceraldehyde 3-phosphate: step 4/5. Catalyzes the reversible conversion of 2-phosphoglycerate (2-PG) into phosphoenolpyruvate (PEP). It is essential for the degradation of carbohydrates via glycolysis. The chain is Enolase from Thermosipho melanesiensis (strain DSM 12029 / CIP 104789 / BI429).